A 286-amino-acid chain; its full sequence is MMSVIPAQWQPYWQLARLDKPIGTLLLLWPTLWALWLASAGVPSFSLLLIFTAGVFVMRSAGCVINDYADRKFDGYVKRTASRPLPAGRLTAVRALLFFLLLVLIAFVLVWQLNQFTIYLSVGGLLLAAIYPFMKRVTSLPQVVLGMAFSWAIPMAYGAVVGQLTVTTWLLFLANLVWTIAYDTMYAMVDRDDDLKIGVKSTAILFGQNDRLYIALLQLGTLTLLAIIGWLEQLTVSYYFSLLLAAGLFIYQQWLIRHRQRDACFRAFLNNNWVGMLIFAGIMLAC.

A run of 9 helical transmembrane segments spans residues 22–42 (IGTL…SAGV), 45–65 (FSLL…GCVI), 90–110 (LTAV…FVLV), 113–133 (LNQF…IYPF), 142–162 (QVVL…AVVG), 169–189 (WLLF…YAMV), 212–232 (LYIA…GWLE), 236–256 (VSYY…QWLI), and 265–285 (FRAF…IMLA).

It belongs to the UbiA prenyltransferase family. Mg(2+) is required as a cofactor.

The protein localises to the cell inner membrane. It carries out the reaction all-trans-octaprenyl diphosphate + 4-hydroxybenzoate = 4-hydroxy-3-(all-trans-octaprenyl)benzoate + diphosphate. The protein operates within cofactor biosynthesis; ubiquinone biosynthesis. In terms of biological role, catalyzes the prenylation of para-hydroxybenzoate (PHB) with an all-trans polyprenyl group. Mediates the second step in the final reaction sequence of ubiquinone-8 (UQ-8) biosynthesis, which is the condensation of the polyisoprenoid side chain with PHB, generating the first membrane-bound Q intermediate 3-octaprenyl-4-hydroxybenzoate. This Tolumonas auensis (strain DSM 9187 / NBRC 110442 / TA 4) protein is 4-hydroxybenzoate octaprenyltransferase.